The sequence spans 147 residues: Large ribosomal subunit protein uL16 (147 aa).

The span at Met1 to Arg16 shows a compositional bias: basic residues. A disordered region spans residues Met1–Gln20.

Belongs to the universal ribosomal protein uL16 family. As to quaternary structure, part of the 50S ribosomal subunit.

Its function is as follows. Binds 23S rRNA and is also seen to make contacts with the A and possibly P site tRNAs. The chain is Large ribosomal subunit protein uL16 from Alkaliphilus metalliredigens (strain QYMF).